Reading from the N-terminus, the 179-residue chain is Large ribosomal subunit protein uL6 (179 aa).

The protein belongs to the universal ribosomal protein uL6 family. As to quaternary structure, part of the 50S ribosomal subunit.

This protein binds to the 23S rRNA, and is important in its secondary structure. It is located near the subunit interface in the base of the L7/L12 stalk, and near the tRNA binding site of the peptidyltransferase center. The protein is Large ribosomal subunit protein uL6 of Acidobacterium capsulatum (strain ATCC 51196 / DSM 11244 / BCRC 80197 / JCM 7670 / NBRC 15755 / NCIMB 13165 / 161).